Here is a 467-residue protein sequence, read N- to C-terminus: MIQLPFIQRLKWEEYMALFLGFFFVIFEKLLSCLAFMIHNTLGLFYRSVVRNEIKKRSKKRSRSRSVSLQRAKAIHDAADIREMCKISGYYVEDHLVRTEDDYILCIHRISKDSPGRIGSPHPKKLPVVYCHHGLLMNSEVWVCNVDPRNCLVFDLVNKGYDVWLGNNRGNKYSRQHLRFDSTDKEFWDFSIDDFAQYDIPDTIDYILKTSGQTKLTYIGFSQGTAQAFASLSIHPLLNDKINSLIALAPAISPKGLHNRVVDAFVKARPSILFFLFGRKSILPSAGFWQSFLAPKFFDAVLAYCLSQLFNWSCQNISSYQRLVSFAHLYSYTSVKCLVHWFQIMRSAEFRMYDNDQLGHDYFLKYYKAAKFPTNNIRTPIYLIWGGSDSLVDIQAMLNALPAEVEHVKVDSYEHLDMIWADTVKDYVIPPVLRRLRDIHHPPEHEENDKENREIQKNHIAPRNKPI.

Residues 1–17 (MIQLPFIQRLKWEEYMA) lie on the Cytoplasmic side of the membrane. The chain crosses the membrane as a helical; Signal-anchor for type II membrane protein span at residues 18–38 (LFLGFFFVIFEKLLSCLAFMI). At 39 to 467 (HNTLGLFYRS…NHIAPRNKPI (429 aa)) the chain is on the lumenal side. The residue at position 66 (S66) is a Phosphoserine. The 295-residue stretch at 127–421 (PVVYCHHGLL…SYEHLDMIWA (295 aa)) folds into the AB hydrolase-1 domain. S222 functions as the Nucleophile in the catalytic mechanism. Residues N311 and N316 are each glycosylated (N-linked (GlcNAc...) asparagine). Catalysis depends on charge relay system residues D389 and H415. Over residues 440–457 (HHPPEHEENDKENREIQK) the composition is skewed to basic and acidic residues. The tract at residues 440 to 467 (HHPPEHEENDKENREIQKNHIAPRNKPI) is disordered.

Belongs to the AB hydrolase superfamily. Lipase family.

The protein resides in the cytoplasm. It is found in the membrane. Its function is as follows. Probable lipase. The polypeptide is Probable lipase C1672.09 (Schizosaccharomyces pombe (strain 972 / ATCC 24843) (Fission yeast)).